A 388-amino-acid chain; its full sequence is Reducing end xylose-releasing exo-oligoxylanase (388 aa).

E70 functions as the Proton donor in the catalytic mechanism. D263 serves as the catalytic Proton acceptor.

It belongs to the glycosyl hydrolase 8 (cellulase D) family.

The enzyme catalyses Hydrolysis of (1-&gt;4)-beta-D-xylose residues from the reducing end of oligosaccharides.. Its function is as follows. Hydrolyzes xylooligosaccharides with a degree of polymerization of greater than or equal to 3, releasing xylose from the reducing end. Only hydrolyzes the beta anomers of xylooligosaccharides, with inversion of anomeric configuration. Hydrolyzes the glucose and xylose-based trisaccharides where xylose is located at the -1 subsite, GXX, XXG and GXG. Does not hydrolyze xylan, chitosan, lichenan, curdlan or carboxymethylcellulose. This Halalkalibacterium halodurans (strain ATCC BAA-125 / DSM 18197 / FERM 7344 / JCM 9153 / C-125) (Bacillus halodurans) protein is Reducing end xylose-releasing exo-oligoxylanase.